A 510-amino-acid chain; its full sequence is Maturase K (510 aa).

The protein belongs to the intron maturase 2 family. MatK subfamily.

The protein localises to the plastid. It localises to the chloroplast. Functionally, usually encoded in the trnK tRNA gene intron. Probably assists in splicing its own and other chloroplast group II introns. The polypeptide is Maturase K (Gratiola officinalis (Hedgehyssop)).